The sequence spans 194 residues: Ras-related protein Rab-22A (194 aa).

Residue 12 to 20 (GDTGVGKSS) participates in GTP binding. Residues 34–42 (INPTIGASF) carry the Effector region motif. Residues 60–64 (DTAGQ), 118–121 (NKCD), and 148–150 (SAK) contribute to the GTP site. Residues 170–194 (DANPASGGKGFKLRRQPSEPKRSCC) are disordered. The span at 185–194 (QPSEPKRSCC) shows a compositional bias: basic and acidic residues. Residues cysteine 193 and cysteine 194 are each lipidated (S-geranylgeranyl cysteine).

Belongs to the small GTPase superfamily. Rab family. Binds EEA1. Interacts (in its GTP-bound form) with RINL. Interacts directly with ZFYVE20. Interacts (in its GTP-bound form) with RABGEF1. As to expression, detected in brain and heart, and at lower levels in lung and spleen.

Its subcellular location is the endosome membrane. The protein resides in the cell membrane. The protein localises to the early endosome. It is found in the late endosome. It localises to the cell projection. Its subcellular location is the ruffle. The protein resides in the cytoplasmic vesicle. The protein localises to the phagosome. It is found in the phagosome membrane. Plays a role in endocytosis and intracellular protein transport. Mediates trafficking of TF from early endosomes to recycling endosomes. Required for NGF-mediated endocytosis of NTRK1, and subsequent neurite outgrowth. Binds GTP and GDP and has low GTPase activity. Alternates between a GTP-bound active form and a GDP-bound inactive form. The chain is Ras-related protein Rab-22A (Rab22a) from Mus musculus (Mouse).